We begin with the raw amino-acid sequence, 341 residues long: Ketol-acid reductoisomerase (NADP(+)) (341 aa).

One can recognise a KARI N-terminal Rossmann domain in the interval Thr2–Thr182. NADP(+)-binding positions include Tyr25–Gln28, Lys48, Ser51, Ser53, and Asp83–Gln86. The active site involves His108. Residue Gly134 participates in NADP(+) binding. The region spanning Thr183–Asn328 is the KARI C-terminal knotted domain. Mg(2+) is bound by residues Asp191, Glu195, Glu227, and Glu231. Substrate is bound at residue Ser252.

This sequence belongs to the ketol-acid reductoisomerase family. The cofactor is Mg(2+).

The enzyme catalyses (2R)-2,3-dihydroxy-3-methylbutanoate + NADP(+) = (2S)-2-acetolactate + NADPH + H(+). The catalysed reaction is (2R,3R)-2,3-dihydroxy-3-methylpentanoate + NADP(+) = (S)-2-ethyl-2-hydroxy-3-oxobutanoate + NADPH + H(+). It participates in amino-acid biosynthesis; L-isoleucine biosynthesis; L-isoleucine from 2-oxobutanoate: step 2/4. The protein operates within amino-acid biosynthesis; L-valine biosynthesis; L-valine from pyruvate: step 2/4. Its function is as follows. Involved in the biosynthesis of branched-chain amino acids (BCAA). Catalyzes an alkyl-migration followed by a ketol-acid reduction of (S)-2-acetolactate (S2AL) to yield (R)-2,3-dihydroxy-isovalerate. In the isomerase reaction, S2AL is rearranged via a Mg-dependent methyl migration to produce 3-hydroxy-3-methyl-2-ketobutyrate (HMKB). In the reductase reaction, this 2-ketoacid undergoes a metal-dependent reduction by NADPH to yield (R)-2,3-dihydroxy-isovalerate. The protein is Ketol-acid reductoisomerase (NADP(+)) of Clavibacter michiganensis subsp. michiganensis (strain NCPPB 382).